The primary structure comprises 326 residues: Vitamin B12 import system permease protein BtuC (326 aa).

The next 9 membrane-spanning stretches (helical) occupy residues 19-39 (LSVL…LWIL), 61-81 (LAVL…QALF), 88-108 (PGLL…VLLG), 112-132 (LPNW…TLIL), 146-166 (LLAG…AIYF), 184-204 (GGVD…LLWI), 240-260 (GWMV…GLVI), 274-294 (VLLP…DIVA), and 302-322 (ELPI…WLLL).

Belongs to the binding-protein-dependent transport system permease family. FecCD subfamily. The complex is composed of two ATP-binding proteins (BtuD), two transmembrane proteins (BtuC) and a solute-binding protein (BtuF).

The protein localises to the cell inner membrane. Functionally, part of the ABC transporter complex BtuCDF involved in vitamin B12 import. Involved in the translocation of the substrate across the membrane. This is Vitamin B12 import system permease protein BtuC from Escherichia coli O127:H6 (strain E2348/69 / EPEC).